A 129-amino-acid polypeptide reads, in one-letter code: uncharacterized protein (129 aa).

The segment at 1 to 129 (MWLWQDIQCC…HTSNGRTGDL (129 aa)) is disordered. The segment covering 87–100 (KGADTRRLPRETRP) has biased composition (basic and acidic residues). Residues 119–129 (PHTSNGRTGDL) show a composition bias toward polar residues.

This is an uncharacterized protein from Homo sapiens (Human).